A 664-amino-acid polypeptide reads, in one-letter code: 26S rRNA (cytosine-C(5))-methyltransferase nsun-1 (664 aa).

A disordered region spans residues 1-105; it reads MAIVKKKKVS…DDSDAGDHLP (105 aa). Residues 38–52 show a composition bias toward basic residues; it reads PKKKKLVKKVKKSAK. The span at 53–68 shows a compositional bias: basic and acidic residues; that stretch reads KAHEEEPIEQVEKLQL. Acidic residues predominate over residues 84–99; it reads SDDEDLRDDYSDDDSD. S-adenosyl-L-methionine is bound by residues 313 to 319, D337, and D382; that span reads CSAPGGK. C439 (nucleophile) is an active-site residue. The interval 513-664 is disordered; it reads KMSKQGVMEK…RRKKMLAKQQ (152 aa). Positions 519–528 are enriched in basic and acidic residues; that stretch reads VMEKEKEKAA. Positions 541-550 are enriched in acidic residues; that stretch reads EASESSDDEE. Residues 563-572 show a composition bias toward basic residues; that stretch reads KPAKKQQQKK. Residues 606-618 are compositionally biased toward basic and acidic residues; it reads KAAEKQAAVKEDD. Composition is skewed to basic residues over residues 627-644 and 652-664; these read KRAKKPTQFKSKVPKRAA and VKNRRKKMLAKQQ.

The protein belongs to the class I-like SAM-binding methyltransferase superfamily. RsmB/NOP family.

It localises to the nucleus. The protein resides in the nucleolus. The enzyme catalyses a cytidine in 26S rRNA + S-adenosyl-L-methionine = a 5-methylcytidine in 26S rRNA + S-adenosyl-L-homocysteine + H(+). Methyltransferase which methylates the carbon-5 position of cytosine 2982 to 5-methylcytosine (m5C2982) in 26S rRNA. May play a role in the translation of leucine and proline codons. May be required for the translation of specific mRNAs such as mRNAs involved in gonad development, collagen production and cuticle integrity. Plays a role in ensuring the correct localization of the germline-specific protein gld-1 during development. Not required for pre-rRNA processing, the production of mature 5S, 5.8S, 18S or 26S rRNAs or global translation. Plays a role in positively regulating fertility. The sequence is that of 26S rRNA (cytosine-C(5))-methyltransferase nsun-1 from Caenorhabditis elegans.